An 883-amino-acid polypeptide reads, in one-letter code: Phosphoenolpyruvate carboxylase (883 aa).

Active-site residues include H138 and K546.

This sequence belongs to the PEPCase type 1 family. As to quaternary structure, homotetramer. Mg(2+) serves as cofactor.

The catalysed reaction is oxaloacetate + phosphate = phosphoenolpyruvate + hydrogencarbonate. The enzyme has distinct binding sites for each of the allosteric effectors such as acetyl-CoA, fructose 1,6-bisphosphate, guanosine 3'-diphosphate 5'-diphosphate, long chain fatty acids, and L-aspartate. Its function is as follows. Forms oxaloacetate, a four-carbon dicarboxylic acid source for the tricarboxylic acid cycle. The protein is Phosphoenolpyruvate carboxylase (ppc) of Salmonella typhi.